A 359-amino-acid polypeptide reads, in one-letter code: tRNA N6-adenosine threonylcarbamoyltransferase (359 aa).

His115 and His119 together coordinate Fe cation. Substrate is bound by residues 137-141 (LVSGG), Asp170, Gly183, and Asn283. Asp311 contacts Fe cation. The segment at 328 to 359 (APDSLDIAPRSRWPLDEKSAPVFGTGRRGAKA) is disordered.

The protein belongs to the KAE1 / TsaD family. Requires Fe(2+) as cofactor.

The protein resides in the cytoplasm. The enzyme catalyses L-threonylcarbamoyladenylate + adenosine(37) in tRNA = N(6)-L-threonylcarbamoyladenosine(37) in tRNA + AMP + H(+). In terms of biological role, required for the formation of a threonylcarbamoyl group on adenosine at position 37 (t(6)A37) in tRNAs that read codons beginning with adenine. Is involved in the transfer of the threonylcarbamoyl moiety of threonylcarbamoyl-AMP (TC-AMP) to the N6 group of A37, together with TsaE and TsaB. TsaD likely plays a direct catalytic role in this reaction. The chain is tRNA N6-adenosine threonylcarbamoyltransferase from Brucella abortus (strain S19).